A 274-amino-acid chain; its full sequence is Indole-3-glycerol phosphate synthase (274 aa).

This sequence belongs to the TrpC family.

It carries out the reaction 1-(2-carboxyphenylamino)-1-deoxy-D-ribulose 5-phosphate + H(+) = (1S,2R)-1-C-(indol-3-yl)glycerol 3-phosphate + CO2 + H2O. The protein operates within amino-acid biosynthesis; L-tryptophan biosynthesis; L-tryptophan from chorismate: step 4/5. This chain is Indole-3-glycerol phosphate synthase, found in Kineococcus radiotolerans (strain ATCC BAA-149 / DSM 14245 / SRS30216).